Reading from the N-terminus, the 157-residue chain is ATP synthase subunit delta (157 aa).

It belongs to the ATPase delta chain family. In terms of assembly, F-type ATPases have 2 components, F(1) - the catalytic core - and F(0) - the membrane proton channel. F(1) has five subunits: alpha(3), beta(3), gamma(1), delta(1), epsilon(1). F(0) has three main subunits: a(1), b(2) and c(10-14). The alpha and beta chains form an alternating ring which encloses part of the gamma chain. F(1) is attached to F(0) by a central stalk formed by the gamma and epsilon chains, while a peripheral stalk is formed by the delta and b chains.

Its subcellular location is the cell membrane. Functionally, f(1)F(0) ATP synthase produces ATP from ADP in the presence of a proton or sodium gradient. F-type ATPases consist of two structural domains, F(1) containing the extramembraneous catalytic core and F(0) containing the membrane proton channel, linked together by a central stalk and a peripheral stalk. During catalysis, ATP synthesis in the catalytic domain of F(1) is coupled via a rotary mechanism of the central stalk subunits to proton translocation. Its function is as follows. This protein is part of the stalk that links CF(0) to CF(1). It either transmits conformational changes from CF(0) to CF(1) or is implicated in proton conduction. This chain is ATP synthase subunit delta, found in Chloroflexus aurantiacus (strain ATCC 29364 / DSM 637 / Y-400-fl).